Here is a 247-residue protein sequence, read N- to C-terminus: 23S rRNA (guanosine-2'-O-)-methyltransferase RlmB (247 aa).

Residues G197, I217, and L226 each coordinate S-adenosyl-L-methionine.

Belongs to the class IV-like SAM-binding methyltransferase superfamily. RNA methyltransferase TrmH family. RlmB subfamily.

The protein localises to the cytoplasm. It catalyses the reaction guanosine(2251) in 23S rRNA + S-adenosyl-L-methionine = 2'-O-methylguanosine(2251) in 23S rRNA + S-adenosyl-L-homocysteine + H(+). Specifically methylates the ribose of guanosine 2251 in 23S rRNA. The sequence is that of 23S rRNA (guanosine-2'-O-)-methyltransferase RlmB from Burkholderia sp.